The following is a 434-amino-acid chain: ATP-dependent protease ATPase subunit HslU (434 aa).

ATP is bound by residues Ile-18, 60–65, Asp-247, Glu-312, and Arg-384; that span reads GVGKTE.

Belongs to the ClpX chaperone family. HslU subfamily. A double ring-shaped homohexamer of HslV is capped on each side by a ring-shaped HslU homohexamer. The assembly of the HslU/HslV complex is dependent on binding of ATP.

The protein localises to the cytoplasm. Its function is as follows. ATPase subunit of a proteasome-like degradation complex; this subunit has chaperone activity. The binding of ATP and its subsequent hydrolysis by HslU are essential for unfolding of protein substrates subsequently hydrolyzed by HslV. HslU recognizes the N-terminal part of its protein substrates and unfolds these before they are guided to HslV for hydrolysis. The chain is ATP-dependent protease ATPase subunit HslU from Brucella suis (strain ATCC 23445 / NCTC 10510).